The primary structure comprises 71 residues: Exodeoxyribonuclease 7 small subunit (71 aa).

Belongs to the XseB family. In terms of assembly, heterooligomer composed of large and small subunits.

It localises to the cytoplasm. It catalyses the reaction Exonucleolytic cleavage in either 5'- to 3'- or 3'- to 5'-direction to yield nucleoside 5'-phosphates.. In terms of biological role, bidirectionally degrades single-stranded DNA into large acid-insoluble oligonucleotides, which are then degraded further into small acid-soluble oligonucleotides. This Streptococcus pyogenes serotype M1 protein is Exodeoxyribonuclease 7 small subunit.